Here is a 118-residue protein sequence, read N- to C-terminus: Putative pterin-4-alpha-carbinolamine dehydratase (118 aa).

The protein belongs to the pterin-4-alpha-carbinolamine dehydratase family.

The catalysed reaction is (4aS,6R)-4a-hydroxy-L-erythro-5,6,7,8-tetrahydrobiopterin = (6R)-L-erythro-6,7-dihydrobiopterin + H2O. This Pseudomonas aeruginosa (strain LESB58) protein is Putative pterin-4-alpha-carbinolamine dehydratase.